Here is a 521-residue protein sequence, read N- to C-terminus: Glucomannan 4-beta-mannosyltransferase 1 (521 aa).

Residues Val-22 to Phe-42 form a helical membrane-spanning segment. Asp-123 is a catalytic residue. 2 residues coordinate substrate: Asp-182 and Asp-184. Asp-276 is an active-site residue. Helical transmembrane passes span Ile-355–Val-375, Ile-391–Ile-411, Val-471–Gly-491, and Phe-495–Gly-515.

This sequence belongs to the glycosyltransferase 2 family. Plant cellulose synthase-like A subfamily.

Its subcellular location is the golgi apparatus membrane. The enzyme catalyses GDP-mannose + (glucomannan)n = GDP + (glucomannan)n+1.. Its function is as follows. Possesses glucomannan synthase and mannan synthase activities in vitro. Mannan synthase consists of a 4-beta-mannosyltransferase activity on mannan using GDP-mannose. The beta-1,4-mannan product is the backbone for galactomannan synthesis by galactomannan galactosyltransferase. Galactomannan is a noncellulosic polysaccharides of plant cell wall. This chain is Glucomannan 4-beta-mannosyltransferase 1, found in Oryza sativa subsp. japonica (Rice).